The primary structure comprises 193 residues: Acyl carrier protein phosphodiesterase (193 aa).

Belongs to the AcpH family.

The catalysed reaction is holo-[ACP] + H2O = apo-[ACP] + (R)-4'-phosphopantetheine + H(+). Converts holo-ACP to apo-ACP by hydrolytic cleavage of the phosphopantetheine prosthetic group from ACP. The sequence is that of Acyl carrier protein phosphodiesterase from Salmonella choleraesuis (strain SC-B67).